A 708-amino-acid polypeptide reads, in one-letter code: Transcriptional regulator nsrM (708 aa).

Positions 37-63 (CVRCQQRKVRCDHKSPCGNCVASDSQC) form a DNA-binding region, zn(2)-C6 fungal-type.

It localises to the nucleus. Its function is as follows. Transcriptional regulator; part of the gene cluster that mediates the biosynthesis of the tetrahydroxanthone dimer neosartorin, which exhibits antibacterial activity. The chain is Transcriptional regulator nsrM from Aspergillus novofumigatus (strain IBT 16806).